The primary structure comprises 202 residues: Imidazoleglycerol-phosphate dehydratase (202 aa).

Belongs to the imidazoleglycerol-phosphate dehydratase family.

The protein resides in the cytoplasm. The catalysed reaction is D-erythro-1-(imidazol-4-yl)glycerol 3-phosphate = 3-(imidazol-4-yl)-2-oxopropyl phosphate + H2O. It participates in amino-acid biosynthesis; L-histidine biosynthesis; L-histidine from 5-phospho-alpha-D-ribose 1-diphosphate: step 6/9. The chain is Imidazoleglycerol-phosphate dehydratase from Sinorhizobium medicae (strain WSM419) (Ensifer medicae).